The chain runs to 288 residues: Homoserine kinase (288 aa).

An ATP-binding site is contributed by 78-88; sequence PLARGLGSSSS.

It belongs to the GHMP kinase family. Homoserine kinase subfamily.

Its subcellular location is the cytoplasm. The catalysed reaction is L-homoserine + ATP = O-phospho-L-homoserine + ADP + H(+). The protein operates within amino-acid biosynthesis; L-threonine biosynthesis; L-threonine from L-aspartate: step 4/5. Catalyzes the ATP-dependent phosphorylation of L-homoserine to L-homoserine phosphate. The chain is Homoserine kinase from Streptococcus agalactiae serotype V (strain ATCC BAA-611 / 2603 V/R).